Here is a 486-residue protein sequence, read N- to C-terminus: Glutamyl-tRNA(Gln) amidotransferase subunit A (486 aa).

Residues Lys-74 and Ser-149 each act as charge relay system in the active site. Residue Ser-173 is the Acyl-ester intermediate of the active site.

It belongs to the amidase family. GatA subfamily. In terms of assembly, heterotrimer of A, B and C subunits.

The catalysed reaction is L-glutamyl-tRNA(Gln) + L-glutamine + ATP + H2O = L-glutaminyl-tRNA(Gln) + L-glutamate + ADP + phosphate + H(+). Functionally, allows the formation of correctly charged Gln-tRNA(Gln) through the transamidation of misacylated Glu-tRNA(Gln) in organisms which lack glutaminyl-tRNA synthetase. The reaction takes place in the presence of glutamine and ATP through an activated gamma-phospho-Glu-tRNA(Gln). The protein is Glutamyl-tRNA(Gln) amidotransferase subunit A of Prochlorococcus marinus (strain SARG / CCMP1375 / SS120).